Reading from the N-terminus, the 375-residue chain is Queuine tRNA-ribosyltransferase (375 aa).

Asp89 functions as the Proton acceptor in the catalytic mechanism. Substrate contacts are provided by residues 89-93, Asp143, Gln187, and Gly214; that span reads DSGGF. The RNA binding stretch occupies residues 245–251; that stretch reads GVGKPED. Catalysis depends on Asp264, which acts as the Nucleophile. Residues 269 to 273 are RNA binding; important for wobble base 34 recognition; sequence TRNAR. Cys302, Cys304, Cys307, and His333 together coordinate Zn(2+).

This sequence belongs to the queuine tRNA-ribosyltransferase family. In terms of assembly, homodimer. Within each dimer, one monomer is responsible for RNA recognition and catalysis, while the other monomer binds to the replacement base PreQ1. It depends on Zn(2+) as a cofactor.

It catalyses the reaction 7-aminomethyl-7-carbaguanine + guanosine(34) in tRNA = 7-aminomethyl-7-carbaguanosine(34) in tRNA + guanine. It functions in the pathway tRNA modification; tRNA-queuosine biosynthesis. Catalyzes the base-exchange of a guanine (G) residue with the queuine precursor 7-aminomethyl-7-deazaguanine (PreQ1) at position 34 (anticodon wobble position) in tRNAs with GU(N) anticodons (tRNA-Asp, -Asn, -His and -Tyr). Catalysis occurs through a double-displacement mechanism. The nucleophile active site attacks the C1' of nucleotide 34 to detach the guanine base from the RNA, forming a covalent enzyme-RNA intermediate. The proton acceptor active site deprotonates the incoming PreQ1, allowing a nucleophilic attack on the C1' of the ribose to form the product. After dissociation, two additional enzymatic reactions on the tRNA convert PreQ1 to queuine (Q), resulting in the hypermodified nucleoside queuosine (7-(((4,5-cis-dihydroxy-2-cyclopenten-1-yl)amino)methyl)-7-deazaguanosine). In Aliivibrio salmonicida (strain LFI1238) (Vibrio salmonicida (strain LFI1238)), this protein is Queuine tRNA-ribosyltransferase.